The primary structure comprises 292 residues: Ribonuclease HIII (292 aa).

The RNase H type-2 domain maps to 76-292 (TNLIGTDEVG…TQKAIKIAQL (217 aa)). 3 residues coordinate a divalent metal cation: Asp82, Glu83, and Asp186.

Belongs to the RNase HII family. RnhC subfamily. Mn(2+) is required as a cofactor. Requires Mg(2+) as cofactor.

Its subcellular location is the cytoplasm. The catalysed reaction is Endonucleolytic cleavage to 5'-phosphomonoester.. Functionally, endonuclease that specifically degrades the RNA of RNA-DNA hybrids. The polypeptide is Ribonuclease HIII (Lactococcus lactis subsp. lactis (strain IL1403) (Streptococcus lactis)).